We begin with the raw amino-acid sequence, 575 residues long: Probable methionine--tRNA ligase, mitochondrial (575 aa).

The 'HIGH' region motif lies at 52-62; the sequence is FYVNGPPHIGH. The 'KMSKS' region signature appears at 352–356; the sequence is KMSKS. Residue Lys355 coordinates ATP.

Belongs to the class-I aminoacyl-tRNA synthetase family.

The protein localises to the mitochondrion matrix. It catalyses the reaction tRNA(Met) + L-methionine + ATP = L-methionyl-tRNA(Met) + AMP + diphosphate. This chain is Probable methionine--tRNA ligase, mitochondrial (mmetS), found in Dictyostelium discoideum (Social amoeba).